The primary structure comprises 156 residues: Methylated-DNA--protein-cysteine methyltransferase (156 aa).

Cysteine 120 (nucleophile; methyl group acceptor) is an active-site residue.

This sequence belongs to the MGMT family.

Its subcellular location is the cytoplasm. It carries out the reaction a 6-O-methyl-2'-deoxyguanosine in DNA + L-cysteinyl-[protein] = S-methyl-L-cysteinyl-[protein] + a 2'-deoxyguanosine in DNA. It catalyses the reaction a 4-O-methyl-thymidine in DNA + L-cysteinyl-[protein] = a thymidine in DNA + S-methyl-L-cysteinyl-[protein]. Functionally, involved in the cellular defense against the biological effects of O6-methylguanine (O6-MeG) and O4-methylthymine (O4-MeT) in DNA. Repairs the methylated nucleobase in DNA by stoichiometrically transferring the methyl group to a cysteine residue in the enzyme. This is a suicide reaction: the enzyme is irreversibly inactivated. This is Methylated-DNA--protein-cysteine methyltransferase from Metallosphaera sedula (strain ATCC 51363 / DSM 5348 / JCM 9185 / NBRC 15509 / TH2).